We begin with the raw amino-acid sequence, 234 residues long: CD-NTase-associated protein 13 (234 aa).

Residues 20 to 42 (TIMKNVIANVSTAITLALMILWI) traverse the membrane as a helical segment.

In the C-terminal section; belongs to the bacterial STING family.

The protein localises to the cell inner membrane. Functionally, effector protein of a CBASS antivirus system. CBASS (cyclic oligonucleotide-based antiphage signaling system) provides immunity against bacteriophage. The CD-NTase protein synthesizes cyclic nucleotides in response to infection; these serve as specific second messenger signals. The signals activate a diverse range of effectors, leading to bacterial cell death and thus abortive phage infection. A type I-D CBASS(GG) system. Its function is as follows. Binds c-di-GMP (synthesized by the cognate CdnE encoded upstream in the same operon) and about 10-fold less well 3'3'-cGAMP, but not c-di-AMP, 2'3'-cGAMP or cUMP-AMP (tested with a protein without the transmembrane region). The effector protein for this CBASS system, its activity is stimulated by c-di-GMP and leads to cell death. In Roseivirga ehrenbergii (strain DSM 102268 / JCM 13514 / KCTC 12282 / NCIMB 14502 / KMM 6017), this protein is CD-NTase-associated protein 13.